The chain runs to 322 residues: Sideroflexin-1 (322 aa).

S2 carries the post-translational modification N-acetylserine. The Mitochondrial matrix portion of the chain corresponds to 2-102 (SGELPPNINI…MSAQVPMNMT (101 aa)). A helical transmembrane segment spans residues 103–120 (ITGCMMTFYRTTPAVLFW). Over 121 to 146 (QWINQSFNAVVNYTNRSGDAPLTVNE) the chain is Mitochondrial intermembrane. Residues 147–167 (LGTAYVSATTGAVATALGLNA) traverse the membrane as a helical segment. The Mitochondrial matrix segment spans residues 168 to 174 (LTKHVSP). Residues 175-195 (LIGRFVPFAAVAAANCINIPL) form a helical membrane-spanning segment. Residues 196–228 (MRQRELKVGIPVTDENGNRLGESANAAKQAITQ) lie on the Mitochondrial intermembrane side of the membrane. The chain crosses the membrane as a helical span at residues 229–249 (VVVSRILMAAPGMAIPPFIMN). Residues 250 to 266 (TLEKKAFLKRFPWMSAP) are Mitochondrial matrix-facing. A helical membrane pass occupies residues 267-287 (VQVGIVGFCLVFATPLCCALF). Over 288–322 (PQKSSMSVTSLEAELQARIRETYPELRRVYFNKGL) the chain is Mitochondrial intermembrane.

The protein belongs to the sideroflexin family.

It is found in the mitochondrion inner membrane. It catalyses the reaction L-serine(in) = L-serine(out). It carries out the reaction L-alanine(in) = L-alanine(out). The catalysed reaction is L-cysteine(in) = L-cysteine(out). Its function is as follows. Amino acid transporter importing serine, an essential substrate of the mitochondrial branch of the one-carbon pathway, into mitochondria. Mitochondrial serine is then converted to glycine and formate, which exits to the cytosol where it is used to generate the charged folates that serve as one-carbon donors. May also transport other amino acids including alanine and cysteine. The chain is Sideroflexin-1 (SFXN1) from Bos taurus (Bovine).